A 328-amino-acid chain; its full sequence is Naphthalene 1,2-dioxygenase system ferredoxin--NAD(P)(+), reductase component (328 aa).

Residues 1-89 form the 2Fe-2S ferredoxin-type domain; that stretch reads MELLIQPNNR…NCAIEVPEAD (89 aa). Residues cysteine 35, cysteine 40, cysteine 43, and cysteine 73 each coordinate [2Fe-2S] cluster. An FAD-binding FR-type domain is found at 96–193; it reads ARIIKGTVVA…SGPLGTAYLR (98 aa).

This sequence belongs to the bacterial ring-hydroxylating dioxygenase ferredoxin reductase component family. As to quaternary structure, the naphthalene dioxygenase (NDO) multicomponent enzyme system is composed of an electron transfer component and a dioxygenase component (iron sulfur protein (ISP)). The electron transfer component is composed of a ferredoxin reductase (NdoR) and a ferredoxin (NdoA), and the dioxygenase component is formed of a heterohexamer (trimer of heterodimers) of three large alpha subunits (NdoB) and three small beta subunits (NdoC). [2Fe-2S] cluster is required as a cofactor. It depends on FAD as a cofactor.

It carries out the reaction 2 reduced [2Fe-2S]-[ferredoxin] + NAD(+) + H(+) = 2 oxidized [2Fe-2S]-[ferredoxin] + NADH. The catalysed reaction is 2 reduced [2Fe-2S]-[ferredoxin] + NADP(+) + H(+) = 2 oxidized [2Fe-2S]-[ferredoxin] + NADPH. The protein operates within aromatic compound metabolism; naphthalene degradation. Strongly inhibited by p-chloromercuribenzoate. Also inhibited by N-ethylmaleimide and o-phenanthroline. Its function is as follows. Component of the naphthalene dioxygenase (NDO) multicomponent enzyme system which catalyzes the incorporation of both atoms of molecular oxygen into naphthalene to form cis-(1R,2S)-dihydroxy-1,2-dihydronaphthalene. Ferredoxin reductase catalyzes the transfer of electrons from NADH to ferredoxin (NdoA). NADPH is also effective but yields only 39% of the activity obtained with NADH. Also able to catalyze the cis-dihydroxylation of biphenyl and phenanthrene. The sequence is that of Naphthalene 1,2-dioxygenase system ferredoxin--NAD(P)(+), reductase component (ndoR) from Pseudomonas putida (Arthrobacter siderocapsulatus).